The sequence spans 443 residues: Ribosomal protein uS12 methylthiotransferase RimO (443 aa).

An MTTase N-terminal domain is found at 1–116 (MKFHLISLGC…IAEYVGKLIA (116 aa)). Cysteine 10, cysteine 45, cysteine 79, cysteine 154, cysteine 158, and cysteine 161 together coordinate [4Fe-4S] cluster. Residues 140–370 (STPFFRAWVK…LELQQELSTE (231 aa)) form the Radical SAM core domain. The TRAM domain maps to 373–441 (KKYVGTVQKV…QYDLVGGVVS (69 aa)).

It belongs to the methylthiotransferase family. RimO subfamily. It depends on [4Fe-4S] cluster as a cofactor.

It is found in the cytoplasm. It carries out the reaction L-aspartate(89)-[ribosomal protein uS12]-hydrogen + (sulfur carrier)-SH + AH2 + 2 S-adenosyl-L-methionine = 3-methylsulfanyl-L-aspartate(89)-[ribosomal protein uS12]-hydrogen + (sulfur carrier)-H + 5'-deoxyadenosine + L-methionine + A + S-adenosyl-L-homocysteine + 2 H(+). Its function is as follows. Catalyzes the methylthiolation of an aspartic acid residue of ribosomal protein uS12. The sequence is that of Ribosomal protein uS12 methylthiotransferase RimO from Desulfotalea psychrophila (strain LSv54 / DSM 12343).